A 514-amino-acid polypeptide reads, in one-letter code: Peptide chain release factor 3 (514 aa).

A tr-type G domain is found at 8–268 (KKRRTFAIIS…SFLAFAPEPH (261 aa)). Residues 17-24 (SHPDAGKT), 85-89 (DTPGH), and 139-142 (NKLD) each bind GTP.

The protein belongs to the TRAFAC class translation factor GTPase superfamily. Classic translation factor GTPase family. PrfC subfamily.

Its subcellular location is the cytoplasm. Its function is as follows. Increases the formation of ribosomal termination complexes and stimulates activities of RF-1 and RF-2. It binds guanine nucleotides and has strong preference for UGA stop codons. It may interact directly with the ribosome. The stimulation of RF-1 and RF-2 is significantly reduced by GTP and GDP, but not by GMP. The sequence is that of Peptide chain release factor 3 from Streptococcus mutans serotype c (strain ATCC 700610 / UA159).